The primary structure comprises 487 residues: Aromatic-L-amino-acid decarboxylase (487 aa).

The residue at position 1 (Met-1) is an N-acetylmethionine. Repeat copies occupy residues 58–115 (EDIE…TELE) and 118–178 (MMDW…MQAA). The interval 58–178 (EDIEKIIMPG…AASPELMQAA (121 aa)) is 2 X approximate tandem repeats. Residue Thr-82 participates in substrate binding. Residues Ala-148 and Ser-149 each contribute to the pyridoxal 5'-phosphate site. His-192 contributes to the substrate binding site. Positions 246 and 300 each coordinate pyridoxal 5'-phosphate. Lys-303 carries the post-translational modification N6-(pyridoxal phosphate)lysine.

The protein belongs to the group II decarboxylase family. As to quaternary structure, homodimer. Requires pyridoxal 5'-phosphate as cofactor.

The catalysed reaction is L-dopa + H(+) = dopamine + CO2. The enzyme catalyses 5-hydroxy-L-tryptophan + H(+) = serotonin + CO2. Its pathway is catecholamine biosynthesis; dopamine biosynthesis; dopamine from L-tyrosine: step 2/2. In terms of biological role, catalyzes the decarboxylation of L-3,4-dihydroxyphenylalanine (DOPA) to dopamine and L-5-hydroxytryptophan to serotonin. The sequence is that of Aromatic-L-amino-acid decarboxylase (DDC) from Bos taurus (Bovine).